Reading from the N-terminus, the 445-residue chain is Trigger factor (445 aa).

The PPIase FKBP-type domain maps to G162 to T247.

The protein belongs to the FKBP-type PPIase family. Tig subfamily.

The protein resides in the cytoplasm. It catalyses the reaction [protein]-peptidylproline (omega=180) = [protein]-peptidylproline (omega=0). In terms of biological role, involved in protein export. Acts as a chaperone by maintaining the newly synthesized protein in an open conformation. Functions as a peptidyl-prolyl cis-trans isomerase. The sequence is that of Trigger factor from Rickettsia conorii (strain ATCC VR-613 / Malish 7).